We begin with the raw amino-acid sequence, 138 residues long: Protein PsiE homolog (138 aa).

A run of 4 helical transmembrane segments spans residues 12–34, 56–76, 84–104, and 109–129; these read YLLQ…ALLI, YEML…ALII, HFPL…LIII, and AIST…FFIA.

The protein belongs to the PsiE family.

It localises to the cell membrane. This chain is Protein PsiE homolog, found in Bacillus subtilis (strain 168).